Reading from the N-terminus, the 187-residue chain is Troponin I, slow skeletal muscle (187 aa).

P2 is subject to N-acetylproline. Residues 2 to 48 are involved in binding TNC; that stretch reads PEVERKPKITASRKLLLKSLMLAKAKECWEQEHEEREAEKVRYLAER. At S58 the chain carries Phosphoserine. Positions 97–118 are involved in binding TNC and actin; the sequence is LKLKVMDLRGKFKRPPLRRVRV.

It belongs to the troponin I family. Binds to actin and tropomyosin. In terms of tissue distribution, highest levels observed in human skeletal muscle (e.g. gastrocnemious muscle), differentiated cultures of primary human muscle cells and rhabdomyosarcoma cells cultured in low serum medium. Expressed in C2 muscle cell myoblasts and myotubes.

Troponin I is the inhibitory subunit of troponin, the thin filament regulatory complex which confers calcium-sensitivity to striated muscle actomyosin ATPase activity. This Homo sapiens (Human) protein is Troponin I, slow skeletal muscle (TNNI1).